We begin with the raw amino-acid sequence, 276 residues long: Formamidopyrimidine-DNA glycosylase (276 aa).

The Schiff-base intermediate with DNA role is filled by Pro-2. The Proton donor role is filled by Glu-3. Lys-59 serves as the catalytic Proton donor; for beta-elimination activity. Positions 93, 112, and 155 each coordinate DNA. An FPG-type zinc finger spans residues 240 to 274 (QVYNREGKPCPRCGDKIAKKKVGGRSSYYCPTCQK). Arg-264 serves as the catalytic Proton donor; for delta-elimination activity.

This sequence belongs to the FPG family. As to quaternary structure, monomer. Requires Zn(2+) as cofactor.

It carries out the reaction Hydrolysis of DNA containing ring-opened 7-methylguanine residues, releasing 2,6-diamino-4-hydroxy-5-(N-methyl)formamidopyrimidine.. It catalyses the reaction 2'-deoxyribonucleotide-(2'-deoxyribose 5'-phosphate)-2'-deoxyribonucleotide-DNA = a 3'-end 2'-deoxyribonucleotide-(2,3-dehydro-2,3-deoxyribose 5'-phosphate)-DNA + a 5'-end 5'-phospho-2'-deoxyribonucleoside-DNA + H(+). Its function is as follows. Involved in base excision repair of DNA damaged by oxidation or by mutagenic agents. Acts as a DNA glycosylase that recognizes and removes damaged bases. Has a preference for oxidized purines, such as 7,8-dihydro-8-oxoguanine (8-oxoG). Has AP (apurinic/apyrimidinic) lyase activity and introduces nicks in the DNA strand. Cleaves the DNA backbone by beta-delta elimination to generate a single-strand break at the site of the removed base with both 3'- and 5'-phosphates. The protein is Formamidopyrimidine-DNA glycosylase of Pelotomaculum thermopropionicum (strain DSM 13744 / JCM 10971 / SI).